The chain runs to 458 residues: ATP-dependent protease ATPase subunit HslU (458 aa).

Residues V18, 60 to 65 (GVGKTE), D270, E335, and R407 each bind ATP.

This sequence belongs to the ClpX chaperone family. HslU subfamily. In terms of assembly, a double ring-shaped homohexamer of HslV is capped on each side by a ring-shaped HslU homohexamer. The assembly of the HslU/HslV complex is dependent on binding of ATP.

It localises to the cytoplasm. Functionally, ATPase subunit of a proteasome-like degradation complex; this subunit has chaperone activity. The binding of ATP and its subsequent hydrolysis by HslU are essential for unfolding of protein substrates subsequently hydrolyzed by HslV. HslU recognizes the N-terminal part of its protein substrates and unfolds these before they are guided to HslV for hydrolysis. This is ATP-dependent protease ATPase subunit HslU from Desulfitobacterium hafniense (strain DSM 10664 / DCB-2).